A 205-amino-acid polypeptide reads, in one-letter code: Phosphoenolpyruvate guanylyltransferase (205 aa).

Positions 138, 154, and 157 each coordinate phosphoenolpyruvate.

This sequence belongs to the CofC family.

It catalyses the reaction phosphoenolpyruvate + GTP + H(+) = enolpyruvoyl-2-diphospho-5'-guanosine + diphosphate. It participates in cofactor biosynthesis; coenzyme F420 biosynthesis. Functionally, guanylyltransferase that catalyzes the activation of phosphoenolpyruvate (PEP) as enolpyruvoyl-2-diphospho-5'-guanosine, via the condensation of PEP with GTP. It is involved in the biosynthesis of coenzyme F420, a hydride carrier cofactor. In Chloroflexus aurantiacus (strain ATCC 29364 / DSM 637 / Y-400-fl), this protein is Phosphoenolpyruvate guanylyltransferase.